A 344-amino-acid chain; its full sequence is Probable glucan endo-1,3-beta-glucosidase At4g16260 (344 aa).

The first 21 residues, M1–G21, serve as a signal peptide directing secretion. E116 acts as the Proton donor in catalysis. Catalysis depends on E257, which acts as the Nucleophile.

The protein belongs to the glycosyl hydrolase 17 family. In terms of assembly, (Microbial infection) Interacts with the 30C02 effector protein (AC G3GD54) of the beet cyst nematode Heterodera schachtii. Interaction with the 30C02 effector protein may potentially suppress beta-1,3-glucanase activity and plant defense.

It localises to the secreted. The catalysed reaction is Hydrolysis of (1-&gt;3)-beta-D-glucosidic linkages in (1-&gt;3)-beta-D-glucans.. May be involved in plant defense against cyst nematode pathogens. The polypeptide is Probable glucan endo-1,3-beta-glucosidase At4g16260 (Arabidopsis thaliana (Mouse-ear cress)).